The chain runs to 319 residues: MDTSTSVTYDSSLQISQFILMGLPGIHEWQHWLSLPLTLLYLLALGANLLIIITIQHETVLHEPMYHLLGILAVVDIGLATTIMPKILAIFWFDAKAISLPMCFAQIYAIHCFFCIESGIFLCMAVDRYIAICRPLQYPSIVTKAFVFKATGFIMLRNGLLTIPVPILAAQRHYCSRNEIEHCLCSNLGVISLACDDITVNKFYQLMLAWVLVGSDMALVFSSYAVILHSVLRLNSAEAMSKALSTCSSHLILILFHTGIIVLSVTHLAEKKIPLIPVFLNVLHNVIPPALNPLACALRMHKLRLGFQRLLGLGQDVSK.

The Extracellular segment spans residues 1-31 (MDTSTSVTYDSSLQISQFILMGLPGIHEWQH). A helical transmembrane segment spans residues 32–52 (WLSLPLTLLYLLALGANLLII). Residues 53–60 (ITIQHETV) lie on the Cytoplasmic side of the membrane. The chain crosses the membrane as a helical span at residues 61-81 (LHEPMYHLLGILAVVDIGLAT). Topologically, residues 82–105 (TIMPKILAIFWFDAKAISLPMCFA) are extracellular. Cysteine 103 and cysteine 195 are joined by a disulfide. Residues 106-126 (QIYAIHCFFCIESGIFLCMAV) form a helical membrane-spanning segment. Residues 127 to 145 (DRYIAICRPLQYPSIVTKA) lie on the Cytoplasmic side of the membrane. Residues 146-166 (FVFKATGFIMLRNGLLTIPVP) traverse the membrane as a helical segment. Residues 167 to 202 (ILAAQRHYCSRNEIEHCLCSNLGVISLACDDITVNK) lie on the Extracellular side of the membrane. A helical transmembrane segment spans residues 203–223 (FYQLMLAWVLVGSDMALVFSS). Topologically, residues 224-243 (YAVILHSVLRLNSAEAMSKA) are cytoplasmic. A helical transmembrane segment spans residues 244 to 263 (LSTCSSHLILILFHTGIIVL). Residues 264 to 277 (SVTHLAEKKIPLIP) are Extracellular-facing. The chain crosses the membrane as a helical span at residues 278–298 (VFLNVLHNVIPPALNPLACAL). The Cytoplasmic portion of the chain corresponds to 299-319 (RMHKLRLGFQRLLGLGQDVSK).

Belongs to the G-protein coupled receptor 1 family.

It is found in the cell membrane. Odorant receptor. This is Olfactory receptor 56B4 (OR56B4) from Homo sapiens (Human).